The following is a 210-amino-acid chain: Scoloptoxin SSD558 (210 aa).

The signal sequence occupies residues 1-23; it reads MNILLPSTLFVLLMFQIIGSGMG.

Contains 3 disulfide bonds. As to expression, expressed by the venom gland.

Its subcellular location is the secreted. The protein is Scoloptoxin SSD558 of Scolopendra dehaani (Thai centipede).